A 1128-amino-acid polypeptide reads, in one-letter code: Zinc finger protein 654 (1128 aa).

The tract at residues 498–523 (GFDSLTDQSTGETDPDDVSGVQPKGH) is disordered. 5 C2H2-type zinc fingers span residues 572-594 (FACVICGRKFRNRGLMQKHLKNH), 746-771 (FKCPALGCVRIFKRIGFLNKHAMTVH), 787-809 (GKCKFCQRQFEDSQHFIDHLNRH), 815-839 (YFCLHFNCNESFKLPFQLAQHTKSH), and 844-868 (AQCSFPECHELFEDLPLLYEHEAQH). A disordered region spans residues 891–951 (DSNPNQEKDS…GNERSDDTVS (61 aa)). Polar residues-rich tracts occupy residues 903–915 (NEKQTISLPVSTS) and 937–951 (SLVQNGNERSDDTVS). Phosphoserine occurs at positions 1123 and 1127.

It belongs to the krueppel C2H2-type zinc-finger protein family.

The protein localises to the nucleus. In terms of biological role, may be involved in transcriptional regulation. The protein is Zinc finger protein 654 of Homo sapiens (Human).